Reading from the N-terminus, the 257-residue chain is Gene 3 protein (257 aa).

Over residues 163 to 176 the composition is skewed to polar residues; that stretch reads STENLLGQTQSSTH. The disordered stretch occupies residues 163-257; it reads STENLLGQTQ…SDSSVSSVFF (95 aa). Basic and acidic residues predominate over residues 214–240; it reads SIREETVSGMARAREECNSPSEHDRLT.

The protein is Gene 3 protein of Equine herpesvirus 1 (strain Ab4p) (EHV-1).